A 121-amino-acid polypeptide reads, in one-letter code: Large ribosomal subunit protein bL12 (121 aa).

Belongs to the bacterial ribosomal protein bL12 family. Homodimer. Part of the ribosomal stalk of the 50S ribosomal subunit. Forms a multimeric L10(L12)X complex, where L10 forms an elongated spine to which 2 to 4 L12 dimers bind in a sequential fashion. Binds GTP-bound translation factors.

Its function is as follows. Forms part of the ribosomal stalk which helps the ribosome interact with GTP-bound translation factors. Is thus essential for accurate translation. This Shewanella pealeana (strain ATCC 700345 / ANG-SQ1) protein is Large ribosomal subunit protein bL12.